Reading from the N-terminus, the 156-residue chain is S-ribosylhomocysteine lyase (156 aa).

Fe cation is bound by residues His56, His60, and Cys123.

The protein belongs to the LuxS family. Homodimer. It depends on Fe cation as a cofactor.

The enzyme catalyses S-(5-deoxy-D-ribos-5-yl)-L-homocysteine = (S)-4,5-dihydroxypentane-2,3-dione + L-homocysteine. Functionally, involved in the synthesis of autoinducer 2 (AI-2) which is secreted by bacteria and is used to communicate both the cell density and the metabolic potential of the environment. The regulation of gene expression in response to changes in cell density is called quorum sensing. Catalyzes the transformation of S-ribosylhomocysteine (RHC) to homocysteine (HC) and 4,5-dihydroxy-2,3-pentadione (DPD). This is S-ribosylhomocysteine lyase from Staphylococcus saprophyticus subsp. saprophyticus (strain ATCC 15305 / DSM 20229 / NCIMB 8711 / NCTC 7292 / S-41).